The sequence spans 52 residues: Alpha-crystallin B chain (52 aa).

It belongs to the small heat shock protein (HSP20) family. As to quaternary structure, homodimer. Aggregates with homologous proteins, including alpha-A-crystallin and the small heat shock protein HSPB1, to form large heteromeric complexes.

Its function is as follows. May contribute to the transparency and refractive index of the lens. This is Alpha-crystallin B chain (CRYAB) from Eudromia elegans (Elegant crested-tinamou).